We begin with the raw amino-acid sequence, 215 residues long: Ion-translocating oxidoreductase complex subunit G (215 aa).

A helical membrane pass occupies residues 9 to 29; that stretch reads GLLLSGFALICTAAVALVNEA. An FMN phosphoryl threonine modification is found at Thr176.

Belongs to the RnfG family. In terms of assembly, the complex is composed of six subunits: RnfA, RnfB, RnfC, RnfD, RnfE and RnfG. Requires FMN as cofactor.

It is found in the cell inner membrane. Part of a membrane-bound complex that couples electron transfer with translocation of ions across the membrane. This Shewanella amazonensis (strain ATCC BAA-1098 / SB2B) protein is Ion-translocating oxidoreductase complex subunit G.